The chain runs to 229 residues: High molecular weight rubredoxin (229 aa).

The segment at 1–158 is flavodoxin-reductase-like; the sequence is MDTKALHTLT…YYHQVKRGTT (158 aa). Positions 178-229 constitute a Rubredoxin-like domain; that stretch reads SPKYQCTICNYVYDPVQGDPEHGIAPGTPFADLPEDWTCPICGAGKDAFEQI. Cys-183, Cys-186, Cys-216, and Cys-219 together coordinate Fe cation.

The protein in the N-terminal section; belongs to the flavodoxin reductase family. As to quaternary structure, homodimer. The cofactor is Fe cation. Requires FMN as cofactor.

In terms of biological role, has nitric oxide reductase activity in combination with FprA; probably involved in nitrosative stress protection. Acts as an NADH:FprA oxidoreductase. The polypeptide is High molecular weight rubredoxin (hrb) (Moorella thermoacetica (strain ATCC 39073 / JCM 9320)).